Here is a 518-residue protein sequence, read N- to C-terminus: Reduced folate transporter (518 aa).

Position 1 is an N-acetylmethionine (Met1). Over Met1 to Val29 the chain is Cytoplasmic. The helical transmembrane segment at Phe30–Pro50 threads the bilayer. Ile48 and Thr49 together coordinate folate. Residues Tyr51–Val62 lie on the Extracellular side of the membrane. N-linked (GlcNAc...) asparagine glycosylation is present at Asn56. Residues Thr63–Thr85 traverse the membrane as a helical segment. Residues Asp86–Arg89 lie on the Cytoplasmic side of the membrane. A helical transmembrane segment spans residues Tyr90–Leu110. Over Gly111–Val114 the chain is Extracellular. The helical transmembrane segment at Val115–Tyr137 threads the bilayer. Folate contacts are provided by Glu121 and Arg131. Residues Ile138–Ala151 lie on the Cytoplasmic side of the membrane. Residues Ser152 to Glu176 form a helical membrane-spanning segment. Position 162 (Val162) interacts with folate. At Gln177–Asn181 the chain is on the extracellular side. The helical transmembrane segment at Ser182–Ser200 threads the bilayer. Over Leu201–Gln266 the chain is Cytoplasmic. Residues Pro267 to Val292 traverse the membrane as a helical segment. 3 residues coordinate folate: Ala281, Gly282, and Ile286. Topologically, residues Leu293–Leu300 are extracellular. A helical membrane pass occupies residues Asn301 to Phe323. Residues Val324–Ala329 lie on the Cytoplasmic side of the membrane. The helical transmembrane segment at Leu330–Met350 threads the bilayer. Topologically, residues Tyr351–Val353 are extracellular. The chain crosses the membrane as a helical span at residues His354 to Gln377. 2 residues coordinate folate: Tyr366 and Val370. Residues Phe378 to Leu391 lie on the Cytoplasmic side of the membrane. The chain crosses the membrane as a helical span at residues Ser392–Thr415. Residues Ala407–Ser419 are required for substrate-binding. Residues Leu416–Gly423 lie on the Extracellular side of the membrane. A helical membrane pass occupies residues Leu424–Val448. Residues Gly449–Leu512 lie on the Cytoplasmic side of the membrane. Phosphoserine occurs at positions 473, 478, and 483. Residues Gln480–Ala518 are disordered.

The protein belongs to the reduced folate carrier (RFC) transporter (TC 2.A.48) family.

It localises to the cell membrane. It is found in the apical cell membrane. Its subcellular location is the basolateral cell membrane. The catalysed reaction is 5-amino-1-(5-phospho-beta-D-ribosyl)imidazole-4-carboxamide(in) + (6S)-5-methyl-5,6,7,8-tetrahydrofolate(out) = 5-amino-1-(5-phospho-beta-D-ribosyl)imidazole-4-carboxamide(out) + (6S)-5-methyl-5,6,7,8-tetrahydrofolate(in). Its function is as follows. Antiporter that mediates the import of reduced folates, driven by the export of organic anions. Also acts as an importer of immunoreactive cyclic dinucleotides, but with a lower transporter activity. Mechanistically, acts as a secondary active transporter, which exports intracellular organic anions down their concentration gradients to facilitate the uptake of its substrates. Has high affinity for N5-methyltetrahydrofolate, the predominant circulating form of folate. Also mediates the import of antifolate drug methotrexate. 5-amino-4-imidazolecarboxamide riboside (AICAR), when phosphorylated to AICAR monophosphate, can serve as an organic anion for antiporter activity. In Cricetulus griseus (Chinese hamster), this protein is Reduced folate transporter.